We begin with the raw amino-acid sequence, 407 residues long: Argininosuccinate synthase (407 aa).

ATP contacts are provided by residues 16–24 and Ala44; that span reads AYSGGLDTS. 2 residues coordinate L-citrulline: Tyr96 and Ser101. ATP is bound at residue Gly126. Residues Thr128, Asn132, and Asp133 each coordinate L-aspartate. Asn132 contacts L-citrulline. The L-citrulline site is built by Arg136, Ser185, Ser194, Glu270, and Tyr282.

The protein belongs to the argininosuccinate synthase family. Type 1 subfamily. As to quaternary structure, homotetramer.

The protein localises to the cytoplasm. It catalyses the reaction L-citrulline + L-aspartate + ATP = 2-(N(omega)-L-arginino)succinate + AMP + diphosphate + H(+). It functions in the pathway amino-acid biosynthesis; L-arginine biosynthesis; L-arginine from L-ornithine and carbamoyl phosphate: step 2/3. The sequence is that of Argininosuccinate synthase from Shewanella denitrificans (strain OS217 / ATCC BAA-1090 / DSM 15013).